The following is a 127-amino-acid chain: Fumarate reductase subunit C (127 aa).

3 consecutive transmembrane segments (helical) span residues 30–50 (ATVLPLILFTLFLTVGLGSLV), 67–87 (VVIAINIVALLGSLLHAHTFF), and 107–127 (IIVLAQWAAVAFISLIVLIVV).

It belongs to the FrdC family. Part of an enzyme complex containing four subunits: a flavoprotein (FrdA), an iron-sulfur protein (FrdB), and two hydrophobic anchor proteins (FrdC and FrdD).

The protein localises to the cell inner membrane. Anchors the catalytic components of the fumarate reductase complex to the cell membrane, binds quinones. The protein is Fumarate reductase subunit C of Vibrio vulnificus (strain CMCP6).